A 624-amino-acid polypeptide reads, in one-letter code: Multicopper oxidase elcG (624 aa).

The signal sequence occupies residues 1-18; that stretch reads MACNILNFLTGLLSLSST. 2 consecutive Plastocyanin-like domains span residues 48 to 160 and 216 to 373; these read PGRA…IERG and CMDA…TIRI. Asn-65 carries N-linked (GlcNAc...) asparagine glycosylation. Residues His-96, His-98, His-140, and His-142 each coordinate Cu cation. N-linked (GlcNAc...) asparagine glycans are attached at residues Asn-271, Asn-296, and Asn-464. The region spanning 474–603 is the Plastocyanin-like 3 domain; sequence FLFQDPSQIE…GGMGVVILDG (130 aa). Residues His-511, His-514, His-516, His-585, Cys-586, His-587, and His-591 each contribute to the Cu cation site.

It belongs to the multicopper oxidase family.

It participates in secondary metabolite biosynthesis. Functionally, multicopper oxidase; part of the gene cluster that mediates the biosynthesis of elsinochrome C, a perelyenequinone phytotoxin structurally similar to cercosporin. The first step of elsinochrome C biosynthesis is performed by the polyketide synthase elcA which catalyzes the formation of nor-toralactone. The starter unit acyltransferase (SAT) domain of elcA initiates polyketide extension by the selective utilization of acetyl-CoA, which is elongated to the heptaketide in the beta-ketoacyl synthase (KS) domain by successive condensations with six malonyl units introduced by the malonyl acyltransferase (MAT) domain. The product template (PT) domain catalyzes C4-C9 and C2-C11 aldol cyclizations and dehydrations to a trihydroxynaphthalene, which is thought to be delivered to the thioesterase (TE) domain for product release. The bifunctional enzyme elcB then methylates nor-toralactone to toralactone before conducting an unusual oxidative aromatic ring opening. The next step in perylenequinone biosynthesis is an O-methylation at the nascent OH-6 of the elcB product performed by the O-methyltransferase elcD. The oxidative coupling of the two monomeric naphthol units in perylenequinone biosynthesis is catalyzed by the FAD-dependent monooxygenase elcE and the multicopper oxidase elcG. ElcG might catalyze the first intermolecular coupling in a regio- and stereo-selective manner via a phenol radical coupling mechanism and the elcE could forge the second C-C bond intramolecularly via a hydride transfer mechanism. The fasciclin domain-containing protein elcF might also play a role duting this step. The last piece of the puzzle in the biosynthesis of elsinochrome C is the additional annulation by enolate coupling to afford the dihydrobenzo(ghi)perylenequinone system, catalyzed by the FAD-dependent monooxygenase elcH. The chain is Multicopper oxidase elcG from Phaeosphaeria nodorum (strain SN15 / ATCC MYA-4574 / FGSC 10173) (Glume blotch fungus).